Reading from the N-terminus, the 277-residue chain is Phosphoribosylaminoimidazole-succinocarboxamide synthase (277 aa).

Belongs to the SAICAR synthetase family.

The catalysed reaction is 5-amino-1-(5-phospho-D-ribosyl)imidazole-4-carboxylate + L-aspartate + ATP = (2S)-2-[5-amino-1-(5-phospho-beta-D-ribosyl)imidazole-4-carboxamido]succinate + ADP + phosphate + 2 H(+). It participates in purine metabolism; IMP biosynthesis via de novo pathway; 5-amino-1-(5-phospho-D-ribosyl)imidazole-4-carboxamide from 5-amino-1-(5-phospho-D-ribosyl)imidazole-4-carboxylate: step 1/2. This chain is Phosphoribosylaminoimidazole-succinocarboxamide synthase, found in Salinispora arenicola (strain CNS-205).